The following is a 285-amino-acid chain: Pantothenate synthetase (285 aa).

Position 30–37 (30–37 (MGFLHEGH)) interacts with ATP. Residue His37 is the Proton donor of the active site. Residue Gln61 participates in (R)-pantoate binding. Gln61 is a binding site for beta-alanine. Residue 147–150 (GQKD) coordinates ATP. Gln153 contributes to the (R)-pantoate binding site. ATP-binding positions include Val176 and 184-187 (KSSR).

Belongs to the pantothenate synthetase family. Homodimer.

Its subcellular location is the cytoplasm. The enzyme catalyses (R)-pantoate + beta-alanine + ATP = (R)-pantothenate + AMP + diphosphate + H(+). The protein operates within cofactor biosynthesis; (R)-pantothenate biosynthesis; (R)-pantothenate from (R)-pantoate and beta-alanine: step 1/1. Functionally, catalyzes the condensation of pantoate with beta-alanine in an ATP-dependent reaction via a pantoyl-adenylate intermediate. This chain is Pantothenate synthetase, found in Listeria welshimeri serovar 6b (strain ATCC 35897 / DSM 20650 / CCUG 15529 / CIP 8149 / NCTC 11857 / SLCC 5334 / V8).